The primary structure comprises 90 residues: Cell division topological specificity factor (90 aa).

This sequence belongs to the MinE family.

In terms of biological role, prevents the cell division inhibition by proteins MinC and MinD at internal division sites while permitting inhibition at polar sites. This ensures cell division at the proper site by restricting the formation of a division septum at the midpoint of the long axis of the cell. This Francisella philomiragia subsp. philomiragia (strain ATCC 25017 / CCUG 19701 / FSC 153 / O#319-036) protein is Cell division topological specificity factor.